The following is a 434-amino-acid chain: Pre-mRNA-splicing factor PRP46 (434 aa).

7 WD repeats span residues 120 to 160 (GHTG…LKIT), 163 to 202 (GHVMSVRDIAISKRHPYMFSASEDKLVKCWDLERNTAIRD), 205 to 244 (GHLSGVHTVDVHPSLDIIATAGRDAVVRLWDIRSRSEIMV), 247 to 288 (GHKS…KVLT), 290 to 329 (HSRNIRDLTLHPAEFSFASVSTNDVRSWKLPEGQLLTNFQ), 331 to 369 (QNTGILNTVSINHDNVLLAGGDDGTLCFYDYKTGHKYQS), and 380 to 419 (ESERSILCSTFDVTGTRLITGEGDKSIKIWKQVPDATEDT).

The protein belongs to the WD repeat PRL1/PRL2 family. As to quaternary structure, associated with the spliceosome.

Its subcellular location is the cytoplasm. It is found in the nucleus. Its function is as follows. Involved in pre-mRNA splicing and required for cell cycle progression at G2/M. The sequence is that of Pre-mRNA-splicing factor PRP46 (PRP46) from Kluyveromyces lactis (strain ATCC 8585 / CBS 2359 / DSM 70799 / NBRC 1267 / NRRL Y-1140 / WM37) (Yeast).